A 313-amino-acid chain; its full sequence is Hydroxyphenylpyruvate reductase (313 aa).

NADP(+)-binding positions include 152-155 (LGRI), 174-176 (SRS), and Ile-230. Arg-232 is an active-site residue. Residue Asp-256 coordinates NADP(+). Glu-261 is a catalytic residue. Residue His-279 is the Proton donor of the active site.

Belongs to the D-isomer specific 2-hydroxyacid dehydrogenase family.

The catalysed reaction is (2R)-2-hydroxy-3-(4-hydroxyphenyl)propanoate + NAD(+) = 3-(4-hydroxyphenyl)pyruvate + NADH + H(+). It carries out the reaction (2R)-2-hydroxy-3-(4-hydroxyphenyl)propanoate + NADP(+) = 3-(4-hydroxyphenyl)pyruvate + NADPH + H(+). The enzyme catalyses (2R)-3-(3,4-dihydroxyphenyl)lactate + NADP(+) = 3-(3,4-dihydroxyphenyl)pyruvate + NADPH + H(+). It catalyses the reaction (2R)-3-(3,4-dihydroxyphenyl)lactate + NAD(+) = 3-(3,4-dihydroxyphenyl)pyruvate + NADH + H(+). In terms of biological role, catalyzes the NAD(P)H-dependent reduction of 4-hydroxyphenylpyruvate to 4-hydroxyphenyllactate and 3,4-dihydroxyphenylpyruvate to 3,4-dihydroxyphenyllactate in the biosynthesis of rosmarinic acid. Rosmarinic acid is an ester of caffeic acid and 3,4-dihydroxyphenyllactic acid. NADP is the preferred substrate. The sequence is that of Hydroxyphenylpyruvate reductase (HPPR) from Plectranthus scutellarioides (Coleus).